Reading from the N-terminus, the 533-residue chain is Non-specific phospholipase C1 (533 aa).

Residues 1 to 22 form the signal peptide; sequence MAFRRVLTTVILFCYLLISSQS.

Belongs to the bacterial phospholipase C family. Expressed in roots, leaves, stems, flowers and siliques.

The protein localises to the secreted. The polypeptide is Non-specific phospholipase C1 (NPC1) (Arabidopsis thaliana (Mouse-ear cress)).